Here is a 246-residue protein sequence, read N- to C-terminus: Probable transcriptional regulatory protein HD_0596 (246 aa).

Belongs to the TACO1 family.

It localises to the cytoplasm. In Haemophilus ducreyi (strain 35000HP / ATCC 700724), this protein is Probable transcriptional regulatory protein HD_0596.